Here is a 233-residue protein sequence, read N- to C-terminus: Maternal B9.15 protein (233 aa).

Residues 135 to 165 (KATSDYHSGTSSDEEPTNKEPKTIPKVSNPN) form a disordered region.

It belongs to the BTG family.

In Xenopus laevis (African clawed frog), this protein is Maternal B9.15 protein.